The primary structure comprises 130 residues: Small ribosomal subunit protein uS11 (130 aa).

Belongs to the universal ribosomal protein uS11 family. As to quaternary structure, part of the 30S ribosomal subunit.

Located on the platform of the 30S subunit. This chain is Small ribosomal subunit protein uS11, found in Nanoarchaeum equitans (strain Kin4-M).